Reading from the N-terminus, the 481-residue chain is ATP synthase subunit beta (481 aa).

Gly-167 to Thr-174 lines the ATP pocket.

The protein belongs to the ATPase alpha/beta chains family. F-type ATPases have 2 components, CF(1) - the catalytic core - and CF(0) - the membrane proton channel. CF(1) has five subunits: alpha(3), beta(3), gamma(1), delta(1), epsilon(1). CF(0) has three main subunits: a(1), b(2) and c(9-12). The alpha and beta chains form an alternating ring which encloses part of the gamma chain. CF(1) is attached to CF(0) by a central stalk formed by the gamma and epsilon chains, while a peripheral stalk is formed by the delta and b chains.

Its subcellular location is the cell membrane. It catalyses the reaction ATP + H2O + 4 H(+)(in) = ADP + phosphate + 5 H(+)(out). Produces ATP from ADP in the presence of a proton gradient across the membrane. The catalytic sites are hosted primarily by the beta subunits. This Corynebacterium jeikeium (strain K411) protein is ATP synthase subunit beta.